We begin with the raw amino-acid sequence, 362 residues long: GDSL esterase/lipase At5g45670 (362 aa).

The N-terminal stretch at 1–23 is a signal peptide; it reads MARMSLMIMMIMVAVTMINIAKS. The active-site Nucleophile is Ser36. Active-site residues include Asp326 and His329.

This sequence belongs to the 'GDSL' lipolytic enzyme family.

The protein resides in the secreted. This chain is GDSL esterase/lipase At5g45670, found in Arabidopsis thaliana (Mouse-ear cress).